The following is a 153-amino-acid chain: UPF0251 protein Daud_0090 (153 aa).

Residues 129–138 (ELMTRPERCS) show a composition bias toward basic and acidic residues. Residues 129–153 (ELMTRPERCSRPKRGAGKYRVPKKR) are disordered. The segment covering 139-153 (RPKRGAGKYRVPKKR) has biased composition (basic residues).

Belongs to the UPF0251 family.

The chain is UPF0251 protein Daud_0090 from Desulforudis audaxviator (strain MP104C).